The chain runs to 472 residues: Adenosylhomocysteinase (472 aa).

Substrate is bound by residues T64, D138, and E198. Position 199–201 (199–201 (TTT)) interacts with NAD(+). Substrate-binding residues include K228 and D232. NAD(+) contacts are provided by residues N233, 262-267 (GFGDVG), E285, N320, 341-343 (IGH), and N386.

The protein belongs to the adenosylhomocysteinase family. Requires NAD(+) as cofactor.

It localises to the cytoplasm. The catalysed reaction is S-adenosyl-L-homocysteine + H2O = L-homocysteine + adenosine. It participates in amino-acid biosynthesis; L-homocysteine biosynthesis; L-homocysteine from S-adenosyl-L-homocysteine: step 1/1. May play a key role in the regulation of the intracellular concentration of adenosylhomocysteine. In Prochlorococcus marinus (strain MIT 9312), this protein is Adenosylhomocysteinase.